The primary structure comprises 360 residues: DNA replication and repair protein RecF (360 aa).

30–37 (GQNGSGKT) lines the ATP pocket.

The protein belongs to the RecF family.

It localises to the cytoplasm. Its function is as follows. The RecF protein is involved in DNA metabolism; it is required for DNA replication and normal SOS inducibility. RecF binds preferentially to single-stranded, linear DNA. It also seems to bind ATP. The sequence is that of DNA replication and repair protein RecF from Shewanella loihica (strain ATCC BAA-1088 / PV-4).